The following is a 102-amino-acid chain: Small ribosomal subunit protein uS10 (102 aa).

The protein belongs to the universal ribosomal protein uS10 family. Part of the 30S ribosomal subunit.

Functionally, involved in the binding of tRNA to the ribosomes. The protein is Small ribosomal subunit protein uS10 of Streptococcus pneumoniae (strain Taiwan19F-14).